Reading from the N-terminus, the 375-residue chain is tRNA-specific 2-thiouridylase MnmA (375 aa).

Residues 7–14 and M33 each bind ATP; that span reads GLSGGVDS. The interval 102–104 is interaction with target base in tRNA; the sequence is NPD. The active-site Nucleophile is the C107. An intrachain disulfide couples C107 to C205. Position 132 (G132) interacts with ATP. The interaction with tRNA stretch occupies residues 155–157; the sequence is KDQ. The active-site Cysteine persulfide intermediate is the C205. An interaction with tRNA region spans residues 313-314; sequence RY.

The protein belongs to the MnmA/TRMU family.

Its subcellular location is the cytoplasm. The catalysed reaction is S-sulfanyl-L-cysteinyl-[protein] + uridine(34) in tRNA + AH2 + ATP = 2-thiouridine(34) in tRNA + L-cysteinyl-[protein] + A + AMP + diphosphate + H(+). Its function is as follows. Catalyzes the 2-thiolation of uridine at the wobble position (U34) of tRNA, leading to the formation of s(2)U34. The sequence is that of tRNA-specific 2-thiouridylase MnmA from Phytoplasma australiense.